The sequence spans 449 residues: MYLVVVGVNHRTAPVEVREKLSFSDHQLKDAFSALLSYPSIDGSVILSTCNRTEVYVASLDVDTGLKVVREFLANWAGLSLSDIKNYTYNYTLYDAVHHLFRVASGLDSMILGETQILGQVRDAFLKASSLKASNKILNTLFQHAITVGKKVRTETGIDKNPVSISYAAVQLACSFFGSLKDKKALLIGAGKMSSLTAKHLSYYGIKEIIVANRSFEKAEQFAREFNGIAVPFAKIYDILAEVDLVISCTGAPHLIIHKEQLELVIGNRQHPLYLIDIAVPRDIDPEIAKLPNVFLYDIDKLQNVVTKNLEERKKLAEMAENIIETELKAFIEWHSTQFVVPTIVALKKKAEEIKQKELTKALNKLGNISEREKNIVCALAHTILNQLLHTPIVKLKQYALTPQGHLYTEILQNLFDLQVEGERPKNFTHPREEMEESDEKRSYCGESR.

Substrate is bound by residues 49–52 (TCNR), serine 109, 114–116 (ETQ), and glutamine 120. Cysteine 50 functions as the Nucleophile in the catalytic mechanism. Residue 189–194 (GAGKMS) participates in NADP(+) binding. The tract at residues 427 to 449 (NFTHPREEMEESDEKRSYCGESR) is disordered.

It belongs to the glutamyl-tRNA reductase family. In terms of assembly, homodimer.

The enzyme catalyses (S)-4-amino-5-oxopentanoate + tRNA(Glu) + NADP(+) = L-glutamyl-tRNA(Glu) + NADPH + H(+). It functions in the pathway porphyrin-containing compound metabolism; protoporphyrin-IX biosynthesis; 5-aminolevulinate from L-glutamyl-tRNA(Glu): step 1/2. Its function is as follows. Catalyzes the NADPH-dependent reduction of glutamyl-tRNA(Glu) to glutamate 1-semialdehyde (GSA). In Carboxydothermus hydrogenoformans (strain ATCC BAA-161 / DSM 6008 / Z-2901), this protein is Glutamyl-tRNA reductase.